We begin with the raw amino-acid sequence, 29 residues long: Alpha-amylase inhibitor 2 (29 aa).

The protein belongs to the protease inhibitor I6 (cereal trypsin/alpha-amylase inhibitor) family.

It is found in the secreted. Its function is as follows. Alpha-amylase inhibitor. In Saussurea costus (Costus), this protein is Alpha-amylase inhibitor 2.